The sequence spans 271 residues: DNA repair protein RecO (271 aa).

The protein belongs to the RecO family.

Functionally, involved in DNA repair and RecF pathway recombination. This Rhodococcus erythropolis (strain PR4 / NBRC 100887) protein is DNA repair protein RecO.